Reading from the N-terminus, the 232-residue chain is Orotidine 5'-phosphate decarboxylase (232 aa).

Substrate contacts are provided by residues D16, K38, 65–74 (DLKLHDIGNT), T119, R180, Q189, G209, and R210. K67 serves as the catalytic Proton donor.

Belongs to the OMP decarboxylase family. Type 1 subfamily. Homodimer.

The enzyme catalyses orotidine 5'-phosphate + H(+) = UMP + CO2. It functions in the pathway pyrimidine metabolism; UMP biosynthesis via de novo pathway; UMP from orotate: step 2/2. In terms of biological role, catalyzes the decarboxylation of orotidine 5'-monophosphate (OMP) to uridine 5'-monophosphate (UMP). This is Orotidine 5'-phosphate decarboxylase from Methylorubrum extorquens (strain PA1) (Methylobacterium extorquens).